A 217-amino-acid chain; its full sequence is Ribonuclease HII (217 aa).

One can recognise an RNase H type-2 domain in the interval 27–216 (RTIAGIDEAG…VREHLGESRC (190 aa)). 3 residues coordinate a divalent metal cation: aspartate 33, glutamate 34, and aspartate 125.

It belongs to the RNase HII family. Mn(2+) serves as cofactor. Mg(2+) is required as a cofactor.

It localises to the cytoplasm. It catalyses the reaction Endonucleolytic cleavage to 5'-phosphomonoester.. In terms of biological role, endonuclease that specifically degrades the RNA of RNA-DNA hybrids. This chain is Ribonuclease HII, found in Geobacter sulfurreducens (strain ATCC 51573 / DSM 12127 / PCA).